A 273-amino-acid chain; its full sequence is Large ribosomal subunit protein uL2 (273 aa).

The interval 222–273 (GMAMNPVDHPHGGGEGRNKGIQPVSPWGTPAKGYRTRSNKRTDKYIVRRRNK) is disordered. Residues 229–239 (DHPHGGGEGRN) are compositionally biased toward basic and acidic residues.

This sequence belongs to the universal ribosomal protein uL2 family. Part of the 50S ribosomal subunit. Forms a bridge to the 30S subunit in the 70S ribosome.

Its function is as follows. One of the primary rRNA binding proteins. Required for association of the 30S and 50S subunits to form the 70S ribosome, for tRNA binding and peptide bond formation. It has been suggested to have peptidyltransferase activity; this is somewhat controversial. Makes several contacts with the 16S rRNA in the 70S ribosome. In Tolumonas auensis (strain DSM 9187 / NBRC 110442 / TA 4), this protein is Large ribosomal subunit protein uL2.